Here is a 787-residue protein sequence, read N- to C-terminus: Signal transducer and activator of transcription 5B (787 aa).

Y90 bears the Phosphotyrosine mark. A phosphoserine mark is found at S128 and S193. The interval 232-321 (KHQKTLQLLR…MLAEVNATIT (90 aa)) is required for interaction with NMI. An SH2 domain is found at 589–686 (WNDGAILGFV…EVYSKYYTPV (98 aa)). Y682 bears the Phosphotyrosine mark. Phosphotyrosine; by HCK, JAK and PTK6 is present on Y699.

The protein belongs to the transcription factor STAT family. As to quaternary structure, upon activation, forms homodimers. Forms also heterodimers with related family members. Binds NR3C1. Interacts with NCOA1. Interacts with NMI. Interacts with SOCS7. Interacts (via SH2 domain) with INSR. Interacts with CPEB3; this inhibits STAT5B-mediated transcriptional activation. Post-translationally, tyrosine phosphorylated in response to signaling via activated KIT, resulting in translocation to the nucleus. Tyrosine phosphorylated in response to signaling via activated FLT3; wild-type FLT3 results in much weaker phosphorylation than constitutively activated mutant FLT3. Alternatively, can be phosphorylated by JAK2. Phosphorylation at Tyr-699 by PTK6 or HCK leads to an increase of its transcriptional activity.

Its subcellular location is the cytoplasm. It is found in the nucleus. Carries out a dual function: signal transduction and activation of transcription. Mediates cellular responses to the cytokine KITLG/SCF and other growth factors. Binds to the GAS element and activates PRL-induced transcription. Positively regulates hematopoietic/erythroid differentiation. This is Signal transducer and activator of transcription 5B (STAT5B) from Homo sapiens (Human).